Here is a 295-residue protein sequence, read N- to C-terminus: UTP--glucose-1-phosphate uridylyltransferase (295 aa).

It belongs to the UDPGP type 2 family.

The enzyme catalyses alpha-D-glucose 1-phosphate + UTP + H(+) = UDP-alpha-D-glucose + diphosphate. Functionally, may play a role in stationary phase survival. In Haemophilus influenzae (strain ATCC 51907 / DSM 11121 / KW20 / Rd), this protein is UTP--glucose-1-phosphate uridylyltransferase (galU).